The sequence spans 136 residues: Transport protein particle 20 kDa subunit (136 aa).

It belongs to the TRAPP small subunits family. Sedlin subfamily.

The protein localises to the cytoplasm. It is found in the golgi apparatus. Its subcellular location is the cis-Golgi network. The protein resides in the endoplasmic reticulum. Its function is as follows. Component of the TRAPP I and TRAPP II complexes. TRAPP I plays a key role in the late stages of endoplasmic reticulum to Golgi traffic. TRAPP II seems to play a role in intra-Golgi transport. In Schizosaccharomyces pombe (strain 972 / ATCC 24843) (Fission yeast), this protein is Transport protein particle 20 kDa subunit (trs20).